We begin with the raw amino-acid sequence, 66 residues long: Cold shock protein 2 (66 aa).

A CSD domain is found at 4-63 (GTVKWFNADKGFGFITGEDGTDVFVHFSAIQTDGFKTLDEGQKVTYDEEQGDRGPQATNV).

The protein resides in the cytoplasm. The polypeptide is Cold shock protein 2 (cspL) (Lactiplantibacillus plantarum (strain ATCC BAA-793 / NCIMB 8826 / WCFS1) (Lactobacillus plantarum)).